A 230-amino-acid polypeptide reads, in one-letter code: Ephrin-A3 (230 aa).

A signal peptide spans 1 to 22; that stretch reads MAAAPLLLLLLLVPVPLLPLLA. An Ephrin RBD domain is found at 30–161; the sequence is GNRHAVYWNS…RMKVFVCCAS (132 aa). N-linked (GlcNAc...) asparagine glycosylation is found at Asn38, Asn67, Asn84, and Asn92. 2 cysteine pairs are disulfide-bonded: Cys63–Cys102 and Cys91–Cys150. Gly206 is lipidated: GPI-anchor amidated glycine. The propeptide at 207-230 is removed in mature form; it reads TSPKREHLPLAVGIAFFLMTLLAS.

Belongs to the ephrin family. As to quaternary structure, interacts with EPHA8; activates EPHA8. In terms of tissue distribution, expressed in myogenic progenitor cells.

The protein localises to the cell membrane. Cell surface GPI-bound ligand for Eph receptors, a family of receptor tyrosine kinases which are crucial for migration, repulsion and adhesion during neuronal, vascular and epithelial development. Binds promiscuously Eph receptors residing on adjacent cells, leading to contact-dependent bidirectional signaling into neighboring cells. The signaling pathway downstream of the receptor is referred to as forward signaling while the signaling pathway downstream of the ephrin ligand is referred to as reverse signaling. This is Ephrin-A3 (Efna3) from Mus musculus (Mouse).